Reading from the N-terminus, the 436-residue chain is 3-ketoacyl-CoA thiolase (436 aa).

The active-site Acyl-thioester intermediate is the Cys-99. Residues His-392 and Cys-422 each act as proton acceptor in the active site.

It belongs to the thiolase-like superfamily. Thiolase family. In terms of assembly, heterotetramer of two alpha chains (FadJ) and two beta chains (FadI).

It localises to the cytoplasm. It catalyses the reaction an acyl-CoA + acetyl-CoA = a 3-oxoacyl-CoA + CoA. The protein operates within lipid metabolism; fatty acid beta-oxidation. In terms of biological role, catalyzes the final step of fatty acid oxidation in which acetyl-CoA is released and the CoA ester of a fatty acid two carbons shorter is formed. The sequence is that of 3-ketoacyl-CoA thiolase from Yersinia enterocolitica serotype O:8 / biotype 1B (strain NCTC 13174 / 8081).